The sequence spans 649 residues: Acetyl-coenzyme A synthetase (649 aa).

Residues 191 to 194 (RGGR), threonine 311, and asparagine 335 contribute to the CoA site. ATP-binding positions include 387–389 (GEP), 411–416 (DTWWQT), aspartate 500, and arginine 515. Serine 523 contacts CoA. Arginine 526 provides a ligand contact to ATP. The Mg(2+) site is built by valine 537, phenylalanine 539, and isoleucine 542. Residue arginine 584 coordinates CoA. Lysine 609 bears the N6-acetyllysine mark.

This sequence belongs to the ATP-dependent AMP-binding enzyme family. It depends on Mg(2+) as a cofactor. Post-translationally, acetylated. Deacetylation by the SIR2-homolog deacetylase activates the enzyme.

It carries out the reaction acetate + ATP + CoA = acetyl-CoA + AMP + diphosphate. Its function is as follows. Catalyzes the conversion of acetate into acetyl-CoA (AcCoA), an essential intermediate at the junction of anabolic and catabolic pathways. AcsA undergoes a two-step reaction. In the first half reaction, AcsA combines acetate with ATP to form acetyl-adenylate (AcAMP) intermediate. In the second half reaction, it can then transfer the acetyl group from AcAMP to the sulfhydryl group of CoA, forming the product AcCoA. This chain is Acetyl-coenzyme A synthetase, found in Vibrio cholerae serotype O1 (strain ATCC 39315 / El Tor Inaba N16961).